A 516-amino-acid chain; its full sequence is Cytochrome P450 1A2 (516 aa).

S69 carries an O-linked (GlcNAc) serine glycan. F226 is a substrate binding site. Residue C458 coordinates heme.

Belongs to the cytochrome P450 family. In terms of assembly, interacts with PGRMC1; the interaction requires PGRMC1 homodimerization. Requires heme as cofactor.

The protein localises to the endoplasmic reticulum membrane. It localises to the microsome membrane. It carries out the reaction an organic molecule + reduced [NADPH--hemoprotein reductase] + O2 = an alcohol + oxidized [NADPH--hemoprotein reductase] + H2O + H(+). The catalysed reaction is 17beta-estradiol + reduced [NADPH--hemoprotein reductase] + O2 = 2-hydroxy-17beta-estradiol + oxidized [NADPH--hemoprotein reductase] + H2O + H(+). It catalyses the reaction 17beta-estradiol + reduced [NADPH--hemoprotein reductase] + O2 = 4-hydroxy-17beta-estradiol + oxidized [NADPH--hemoprotein reductase] + H2O + H(+). The enzyme catalyses estrone + reduced [NADPH--hemoprotein reductase] + O2 = 2-hydroxyestrone + oxidized [NADPH--hemoprotein reductase] + H2O + H(+). It carries out the reaction estrone + reduced [NADPH--hemoprotein reductase] + O2 = 4-hydroxyestrone + oxidized [NADPH--hemoprotein reductase] + H2O + H(+). The catalysed reaction is cholesterol + reduced [NADPH--hemoprotein reductase] + O2 = 25-hydroxycholesterol + oxidized [NADPH--hemoprotein reductase] + H2O + H(+). It catalyses the reaction all-trans-retinol + reduced [NADPH--hemoprotein reductase] + O2 = all-trans-retinal + oxidized [NADPH--hemoprotein reductase] + 2 H2O + H(+). The enzyme catalyses all-trans-retinal + reduced [NADPH--hemoprotein reductase] + O2 = all-trans-retinoate + oxidized [NADPH--hemoprotein reductase] + H2O + 2 H(+). It carries out the reaction (5Z,8Z,11Z,14Z)-eicosatetraenoate + reduced [NADPH--hemoprotein reductase] + O2 = (14R,15S)-epoxy-(5Z,8Z,11Z)-eicosatrienoate + oxidized [NADPH--hemoprotein reductase] + H2O + H(+). The catalysed reaction is (5Z,8Z,11Z,14Z)-eicosatetraenoate + reduced [NADPH--hemoprotein reductase] + O2 = (14S,15R)-epoxy-(5Z,8Z,11Z)-eicosatrienoate + oxidized [NADPH--hemoprotein reductase] + H2O + H(+). It catalyses the reaction (5Z,8Z,11Z,14Z,17Z)-eicosapentaenoate + reduced [NADPH--hemoprotein reductase] + O2 = (17R,18S)-epoxy-(5Z,8Z,11Z,14Z)-eicosatetraenoate + oxidized [NADPH--hemoprotein reductase] + H2O + H(+). The enzyme catalyses (4Z,7Z,10Z,13Z,16Z,19Z)-docosahexaenoate + reduced [NADPH--hemoprotein reductase] + O2 = (19R,20S)-epoxy-(4Z,7Z,10Z,13Z,16Z)-docosapentaenoate + oxidized [NADPH--hemoprotein reductase] + H2O + H(+). It carries out the reaction (5S)-hydroperoxy-(6E,8Z,11Z,14Z)-eicosatetraenoate = 5-oxo-(6E,8Z,11Z,14Z)-eicosatetraenoate + H2O. The catalysed reaction is (12S)-hydroperoxy-(5Z,8Z,10E,14Z)-eicosatetraenoate = 12-oxo-(5Z,8Z,10E,14Z)-eicosatetraenoate + H2O. It catalyses the reaction (15S)-hydroperoxy-(5Z,8Z,11Z,13E)-eicosatetraenoate = 15-oxo-(5Z,8Z,11Z,13E)-eicosatetraenoate + H2O. The enzyme catalyses (13S)-hydroperoxy-(9Z,11E)-octadecadienoate = 13-oxo-(9Z,11E)-octadecadienoate + H2O. It carries out the reaction (5Z,8Z,11Z,14Z)-eicosatetraenoate + reduced [NADPH--hemoprotein reductase] + O2 = 13-hydroxy-(5Z,8Z,11Z,14Z)-eicosatetraenoate + oxidized [NADPH--hemoprotein reductase] + H2O + H(+). The catalysed reaction is (5Z,8Z,11Z,14Z)-eicosatetraenoate + reduced [NADPH--hemoprotein reductase] + O2 = 19-hydroxy-(5Z,8Z,11Z,14Z)-eicosatetraenoate + oxidized [NADPH--hemoprotein reductase] + H2O + H(+). It catalyses the reaction (9Z,12Z)-octadecadienoate + reduced [NADPH--hemoprotein reductase] + O2 = 11-hydroxy-(9Z,12Z)-octadecadienoate + oxidized [NADPH--hemoprotein reductase] + H2O + H(+). Its pathway is cofactor metabolism; retinol metabolism. It participates in steroid metabolism; cholesterol metabolism. It functions in the pathway lipid metabolism; arachidonate metabolism. Its function is as follows. A cytochrome P450 monooxygenase involved in the metabolism of various endogenous substrates, including fatty acids, steroid hormones and vitamins. Mechanistically, uses molecular oxygen inserting one oxygen atom into a substrate, and reducing the second into a water molecule, with two electrons provided by NADPH via cytochrome P450 reductase (NADPH--hemoprotein reductase). Catalyzes the hydroxylation of carbon-hydrogen bonds. Exhibits high catalytic activity for the formation of hydroxyestrogens from estrone (E1) and 17beta-estradiol (E2), namely 2-hydroxy E1 and E2. Metabolizes cholesterol toward 25-hydroxycholesterol, a physiological regulator of cellular cholesterol homeostasis. May act as a major enzyme for all-trans retinoic acid biosynthesis in the liver. Catalyzes two successive oxidative transformation of all-trans retinol to all-trans retinal and then to the active form all-trans retinoic acid. Primarily catalyzes stereoselective epoxidation of the last double bond of polyunsaturated fatty acids (PUFA), displaying a strong preference for the (R,S) stereoisomer. Catalyzes bisallylic hydroxylation and omega-1 hydroxylation of PUFA. May also participate in eicosanoids metabolism by converting hydroperoxide species into oxo metabolites (lipoxygenase-like reaction, NADPH-independent). Plays a role in the oxidative metabolism of xenobiotics. Catalyzes the N-hydroxylation of heterocyclic amines and the O-deethylation of phenacetin. Metabolizes caffeine via N3-demethylation. This is Cytochrome P450 1A2 (CYP1A2) from Callithrix jacchus (White-tufted-ear marmoset).